Here is a 207-residue protein sequence, read N- to C-terminus: Cytochrome c biogenesis ATP-binding export protein CcmA (207 aa).

An ABC transporter domain is found at 2-204 (LEVKNLTAIR…NPKLRKIRLG (203 aa)). 34 to 41 (GRNGTGKT) provides a ligand contact to ATP.

It belongs to the ABC transporter superfamily. CcmA exporter (TC 3.A.1.107) family. In terms of assembly, the complex is composed of two ATP-binding proteins (CcmA) and two transmembrane proteins (CcmB).

Its subcellular location is the cell inner membrane. It catalyses the reaction heme b(in) + ATP + H2O = heme b(out) + ADP + phosphate + H(+). Functionally, part of the ABC transporter complex CcmAB involved in the biogenesis of c-type cytochromes; once thought to export heme, this seems not to be the case, but its exact role is uncertain. Responsible for energy coupling to the transport system. The polypeptide is Cytochrome c biogenesis ATP-binding export protein CcmA (Vibrio cholerae serotype O1 (strain ATCC 39315 / El Tor Inaba N16961)).